The following is a 486-amino-acid chain: Cardiolipin synthase A (486 aa).

2 consecutive transmembrane segments (helical) span residues 3–23 (TFYT…IAGV) and 38–58 (MAWL…YLSF). 2 PLD phosphodiesterase domains span residues 219–246 (MDLR…VDPR) and 399–426 (KDGL…DMRS). Catalysis depends on residues H224, K226, D231, H404, K406, and D411.

Belongs to the phospholipase D family. Cardiolipin synthase subfamily. ClsA sub-subfamily.

The protein resides in the cell inner membrane. It carries out the reaction 2 a 1,2-diacyl-sn-glycero-3-phospho-(1'-sn-glycerol) = a cardiolipin + glycerol. Its function is as follows. Catalyzes the reversible phosphatidyl group transfer from one phosphatidylglycerol molecule to another to form cardiolipin (CL) (diphosphatidylglycerol) and glycerol. The sequence is that of Cardiolipin synthase A from Pectobacterium atrosepticum (strain SCRI 1043 / ATCC BAA-672) (Erwinia carotovora subsp. atroseptica).